The following is a 158-amino-acid chain: Transcription elongation factor GreA (158 aa).

Belongs to the GreA/GreB family.

Necessary for efficient RNA polymerase transcription elongation past template-encoded arresting sites. The arresting sites in DNA have the property of trapping a certain fraction of elongating RNA polymerases that pass through, resulting in locked ternary complexes. Cleavage of the nascent transcript by cleavage factors such as GreA or GreB allows the resumption of elongation from the new 3'terminus. GreA releases sequences of 2 to 3 nucleotides. This Acinetobacter baumannii (strain SDF) protein is Transcription elongation factor GreA.